The chain runs to 184 residues: ATP synthase subunit b, chloroplastic (184 aa).

Residues 27–49 form a helical membrane-spanning segment; it reads LATNLINLSVVLGVLIFFGKGVL.

Belongs to the ATPase B chain family. As to quaternary structure, F-type ATPases have 2 components, F(1) - the catalytic core - and F(0) - the membrane proton channel. F(1) has five subunits: alpha(3), beta(3), gamma(1), delta(1), epsilon(1). F(0) has four main subunits: a(1), b(1), b'(1) and c(10-14). The alpha and beta chains form an alternating ring which encloses part of the gamma chain. F(1) is attached to F(0) by a central stalk formed by the gamma and epsilon chains, while a peripheral stalk is formed by the delta, b and b' chains.

It localises to the plastid. It is found in the chloroplast thylakoid membrane. F(1)F(0) ATP synthase produces ATP from ADP in the presence of a proton or sodium gradient. F-type ATPases consist of two structural domains, F(1) containing the extramembraneous catalytic core and F(0) containing the membrane proton channel, linked together by a central stalk and a peripheral stalk. During catalysis, ATP synthesis in the catalytic domain of F(1) is coupled via a rotary mechanism of the central stalk subunits to proton translocation. In terms of biological role, component of the F(0) channel, it forms part of the peripheral stalk, linking F(1) to F(0). This is ATP synthase subunit b, chloroplastic from Nicotiana tabacum (Common tobacco).